Consider the following 404-residue polypeptide: uncharacterized protein (404 aa).

Positions 1 to 21 are cleaved as a signal peptide; that stretch reads MRKLGLALSIMGLLLVSIVAG. C22 bears the N-acetylcysteine mark. C22 is lipidated: S-archaeol cysteine.

It belongs to the BMP lipoprotein family.

The protein localises to the cell membrane. This is an uncharacterized protein from Pyrococcus abyssi (strain GE5 / Orsay).